Consider the following 1956-residue polypeptide: Sodium channel protein type 10 subunit alpha (1956 aa).

The Cytoplasmic segment spans residues 1–125; that stretch reads MEFPIGSLET…FNLIRRTAIK (125 aa). The segment at 27–54 is disordered; sequence QIAAKQGTKKAREKHREQKDQEEKPRPQ. Over residues 40-54 the composition is skewed to basic and acidic residues; it reads KHREQKDQEEKPRPQ. An I repeat occupies 116-405; sequence FNLIRRTAIK…VTMAYEEQNQ (290 aa). Residues 126 to 149 traverse the membrane as a helical segment; that stretch reads VSVHSWFSLFITVTILVNCVCMTR. At 150 to 154 the chain is on the extracellular side; that stretch reads TDLPE. Residues 155–174 form a helical membrane-spanning segment; it reads KIEYVFTVIYTFEALIKILA. Residues 175 to 187 are Cytoplasmic-facing; the sequence is RGFCLNEFTYLRD. A helical membrane pass occupies residues 188–206; sequence PWNWLDFSVITLAYVGTAI. Residues 207–212 are Extracellular-facing; sequence DLRGIS. Residues 213-232 traverse the membrane as a helical; Voltage-sensor segment; it reads GLRTFRVLRALKTVSVIPGL. Residues 233–248 are Cytoplasmic-facing; sequence KVIVGALIHSVKKLAD. A helical transmembrane segment spans residues 249–272; it reads VTILTIFCLSVFALVGLQLFKGNL. Over 273 to 341 the chain is Extracellular; that stretch reads KNKCVKNDMA…PDFNYTSFDS (69 aa). A disulfide bond links Cys-276 and Cys-319. Residues Asn-284, Asn-288, Asn-312, and Asn-335 are each glycosylated (N-linked (GlcNAc...) asparagine). Positions 342 to 366 form an intramembrane region, pore-forming; that stretch reads FAWAFLSLFRLMTQDSWERLYQQTL. Over 367–373 the chain is Extracellular; it reads RTSGKIY. Residues 374-399 form a helical membrane-spanning segment; that stretch reads MIFFVLVIFLGSFYLVNLILAVVTMA. At 400–659 the chain is on the cytoplasmic side; sequence YEEQNQATTD…MWVKLKTILF (260 aa). Phosphoserine is present on residues Ser-441, Ser-444, Ser-467, and Ser-479. Over residues 443–454 the composition is skewed to polar residues; the sequence is HSHNGSPLTSKN. Disordered stretches follow at residues 443–485 and 500–580; these read HSHN…YNQR and SHGS…LAPG. A compositionally biased stretch (basic and acidic residues) spans 561–570; sequence DSRHGEDEHQ. A phosphoserine mark is found at Ser-612 and Ser-615. Residues 647–911 form an II repeat; sequence CCPMWVKLKT…EDDGEVNNLQ (265 aa). A helical transmembrane segment spans residues 660 to 684; the sequence is GLVTDPFAELTITLCIVVNTIFMAM. Residues 685–695 are Extracellular-facing; sequence EHHGMSPTFEA. The helical transmembrane segment at 696–719 threads the bilayer; that stretch reads MLQIGNIVFTIFFTAEMVFKIIAF. Over 720–727 the chain is Cytoplasmic; that stretch reads DPYYYFQK. The helical transmembrane segment at 728 to 747 threads the bilayer; the sequence is KWNIFDCIIVTVSLLELGVA. The Extracellular segment spans residues 748 to 753; the sequence is KKGSLS. A helical; Voltage-sensor transmembrane segment spans residues 754 to 773; it reads VLRSFRLLRVFKLAKSWPTL. At 774–789 the chain is on the cytoplasmic side; the sequence is NTLIKIIGNSVGALGN. The helical transmembrane segment at 790–810 threads the bilayer; it reads LTIILAIIVFVFALVGKQLLG. Topologically, residues 811–834 are extracellular; sequence ENYRNNRKNISAPHEDWPRWHMHD. Asn-819 carries N-linked (GlcNAc...) asparagine glycosylation. An intramembrane region (pore-forming) is located at residues 835-855; it reads FFHSFLIVFRILCGEWIENMW. The Extracellular portion of the chain corresponds to 856–864; that stretch reads ACMEVGQKS. The cysteines at positions 857 and 866 are disulfide-linked. The chain crosses the membrane as a helical span at residues 865 to 890; it reads ICLILFLTVMVLGNLVVLNLFIALLL. Topologically, residues 891–1147 are cytoplasmic; sequence NSFSADNLTA…GWQVRKTCYR (257 aa). Disordered stretches follow at residues 963 to 986 and 1041 to 1089; these read AANT…EHSD and DHLT…GSTV. The stretch at 1140 to 1449 is one III repeat; sequence QVRKTCYRIV…KKYYNAMKKL (310 aa). A helical membrane pass occupies residues 1148–1171; that stretch reads IVEHSWFESFIIFMILLSSGSLAF. Residues 1172-1184 are Extracellular-facing; the sequence is EDYYLDQKPTVKA. Residues 1185–1210 form a helical membrane-spanning segment; the sequence is LLEYTDRVFTFIFVFEMLLKWVAYGF. Residues 1211 to 1216 lie on the Cytoplasmic side of the membrane; the sequence is KKYFTN. The helical transmembrane segment at 1217–1238 threads the bilayer; the sequence is AWCWLDFLIVNISLISLTAKIL. Over 1239–1242 the chain is Extracellular; the sequence is EYSE. Residues 1243–1264 traverse the membrane as a helical; Voltage-sensor segment; it reads VAPIKALRTLRALRPLRALSRF. Over 1265 to 1283 the chain is Cytoplasmic; it reads EGMRVVVDALVGAIPSIMN. The helical transmembrane segment at 1284-1311 threads the bilayer; that stretch reads VLLVCLIFWLIFSIMGVNLFAGKFWRCI. Residues Asn-1312, Asn-1328, and Asn-1336 are each glycosylated (N-linked (GlcNAc...) asparagine). The Extracellular portion of the chain corresponds to 1312–1353; the sequence is NYTDGEFSLVPLSIVNNKSDCKIQNSTGSFFWVNVKVNFDNV. Positions 1354 to 1375 form an intramembrane region, pore-forming; it reads AMGYLALLQVATFKGWMDIMYA. At 1376-1391 the chain is on the extracellular side; the sequence is AVDSREVNMQPKWEDN. A helical membrane pass occupies residues 1392–1418; that stretch reads VYMYLYFVIFIIFGGFFTLNLFVGVII. Over 1419–1471 the chain is Cytoplasmic; sequence DNFNQQKKKLGGQDIFMTEEQKKYYNAMKKLGSKKPQKPIPRPLNKFQGFVFD. Ser-1451 carries the post-translational modification Phosphoserine; by PKC. The stretch at 1458–1757 is one IV repeat; the sequence is IPRPLNKFQG…WEKFDPEATQ (300 aa). The helical transmembrane segment at 1472 to 1495 threads the bilayer; the sequence is IVTRQAFDITIMVLICLNMITMMV. Residues 1496 to 1506 lie on the Extracellular side of the membrane; the sequence is ETDDQSEEKTK. The helical transmembrane segment at 1507–1530 threads the bilayer; the sequence is ILGKINQFFVAVFTGECVMKMFAL. At 1531-1536 the chain is on the cytoplasmic side; it reads RQYYFT. The chain crosses the membrane as a helical span at residues 1537 to 1560; that stretch reads NGWNVFDFIVVVLSIASLIFSAIL. Over 1561–1572 the chain is Extracellular; that stretch reads KSLQSYFSPTLF. Residues 1573–1594 form a helical; Voltage-sensor membrane-spanning segment; that stretch reads RVIRLARIGRILRLIRAAKGIR. Residues 1595–1609 are Cytoplasmic-facing; that stretch reads TLLFALMMSLPALFN. A helical membrane pass occupies residues 1610 to 1632; that stretch reads IGLLLFLVMFIYSIFGMSSFPHV. Residues 1633–1646 lie on the Extracellular side of the membrane; that stretch reads RWEAGIDDMFNFQT. An intramembrane region (pore-forming) is located at residues 1647-1669; sequence FANSMLCLFQITTSAGWDGLLSP. Topologically, residues 1670 to 1697 are extracellular; the sequence is ILNTGPPYCDPNLPNSNGTRGDCGSPAV. Asn-1686 carries N-linked (GlcNAc...) asparagine glycosylation. The helical transmembrane segment at 1698–1722 threads the bilayer; the sequence is GIIFFTTYIIISFLIMVNMYIAVIL. The Cytoplasmic segment spans residues 1723 to 1956; the sequence is ENFNVATEES…TSMELIAPGP (234 aa). Residues 1851-1880 enclose the IQ domain; sequence EDISATVIQKAYRSYVLHRSMALSNTPCVP. The tract at residues 1909–1956 is disordered; sequence SETASATSFPPSYESVTRGLSDRVNMRTSSSIQNEDEATSMELIAPGP.

The protein belongs to the sodium channel (TC 1.A.1.10) family. Nav1.8/SCN10A subfamily. As to quaternary structure, the channel consists of an ion conducting pore forming alpha-subunit regulated by one or more associated auxiliary subunits SCN1B, SCN2B and SCN3B; electrophysiological properties may vary depending on the type of the associated beta subunits. Found in a number of complexes with PRX, DYNLT1 and PDZD2. Interacts with proteins such as FSTL1, PRX, DYNLT1, PDZD2, S100A10 and many others. Interacts with NEDD4 and NEDD4L. In terms of processing, ubiquitinated by NEDD4L; which promotes its endocytosis. Phosphorylation at Ser-1451 by PKC in a highly conserved cytoplasmic loop slows inactivation of the sodium channel and reduces peak sodium currents. Post-translationally, lacks the cysteine which covalently binds the conotoxin GVIIJ. This cysteine (position 816) is speculated in other sodium channel subunits alpha to be implied in covalent binding with the sodium channel subunit beta-2 or beta-4. As to expression, expressed in the dorsal root ganglia and sciatic nerve.

Its subcellular location is the cell membrane. It carries out the reaction Na(+)(in) = Na(+)(out). Its function is as follows. Tetrodotoxin-resistant channel that mediates the voltage-dependent sodium ion permeability of excitable membranes. Assuming opened or closed conformations in response to the voltage difference across the membrane, the protein forms a sodium-selective channel through which sodium ions may pass in accordance with their electrochemical gradient. Plays a role in neuropathic pain mechanisms. The chain is Sodium channel protein type 10 subunit alpha from Homo sapiens (Human).